Consider the following 207-residue polypeptide: Thymidine kinase (207 aa).

Residues 15–22 and 88–91 each bind ATP; these read GSMFSGKS and DEVQ. Catalysis depends on Glu-89, which acts as the Proton acceptor. Zn(2+)-binding residues include Cys-145, Cys-148, Cys-183, and His-186.

This sequence belongs to the thymidine kinase family. As to quaternary structure, homotetramer.

Its subcellular location is the cytoplasm. It catalyses the reaction thymidine + ATP = dTMP + ADP + H(+). The chain is Thymidine kinase from Oceanobacillus iheyensis (strain DSM 14371 / CIP 107618 / JCM 11309 / KCTC 3954 / HTE831).